The sequence spans 541 residues: EH domain-containing protein 4 (541 aa).

At Met1 the chain carries N-acetylmethionine. The segment at 1–20 (MFSWMGRQAGGRERSGGMDA) is disordered. Ser15 carries the phosphoserine modification. Positions 58 to 289 (FENKPMILLV…DLFRDIQSLP (232 aa)) constitute a Dynamin-type G domain. The segment at 68–75 (GQYSTGKT) is G1 motif. 68–75 (GQYSTGKT) lines the ATP pocket. The segment at 94 to 95 (EP) is G2 motif. The tract at residues 156–159 (DSPG) is G3 motif. Ser162 bears the Phosphoserine mark. A G4 motif region spans residues 222–225 (NKAD). Lys223 contributes to the ATP binding site. Residue Val246 is a region of interest, G5 motif. Residue Trp261 coordinates ATP. The 89-residue stretch at 447–535 (DKPVYDELFY…PHLVPPSHRK (89 aa)) folds into the EH domain. Tyr451 is subject to Phosphotyrosine. Ser459 carries the post-translational modification Phosphoserine. The EF-hand domain occupies 479-514 (LPNSVLGKIWKLADCDCDGMLDEEEFALAKHLIKIK). Ca(2+) is bound by residues Asp492, Asp494, Asp496, Met498, and Glu503.

This sequence belongs to the TRAFAC class dynamin-like GTPase superfamily. Dynamin/Fzo/YdjA family. EHD subfamily. Homooligomer, and heterooligomer with EHD1, EHD2 and EHD3. Forms a complex with EHD4 and MICALL1; the complex controls CDH5 trafficking and coordinates angiogenesis.

It localises to the early endosome membrane. The protein localises to the recycling endosome membrane. It is found in the cell membrane. Its subcellular location is the cell junction. The protein resides in the adherens junction. Functionally, ATP- and membrane-binding protein that probably controls membrane reorganization/tubulation upon ATP hydrolysis. Plays a role in early endosomal transport. During sprouting angiogenesis, in complex with PACSIN2 and MICALL1, forms recycling endosome-like tubular structure at asymmetric adherens junctions to control CDH5 trafficking. This Mus musculus (Mouse) protein is EH domain-containing protein 4.